The primary structure comprises 460 residues: uncharacterized protein (460 aa).

Positions 6–64 constitute a TRAM domain; it reads PVKKNSTYNLYITGMGTKGEGIGKINNFTIFVTGAILGEEVEVNIIKVNKNYAVGKLLN. [4Fe-4S] cluster is bound by residues Cys77, Cys83, Cys86, and Cys163. S-adenosyl-L-methionine contacts are provided by Gln287, Tyr316, Glu337, and Asp385. Cys412 serves as the catalytic Nucleophile.

This sequence belongs to the class I-like SAM-binding methyltransferase superfamily. RNA M5U methyltransferase family.

This is an uncharacterized protein from Clostridium tetani (strain Massachusetts / E88).